Here is a 1392-residue protein sequence, read N- to C-terminus: DNA-directed RNA polymerase subunit beta (1392 aa).

This sequence belongs to the RNA polymerase beta chain family. In terms of assembly, the RNAP catalytic core consists of 2 alpha, 1 beta, 1 beta' and 1 omega subunit. When a sigma factor is associated with the core the holoenzyme is formed, which can initiate transcription.

It carries out the reaction RNA(n) + a ribonucleoside 5'-triphosphate = RNA(n+1) + diphosphate. Its function is as follows. DNA-dependent RNA polymerase catalyzes the transcription of DNA into RNA using the four ribonucleoside triphosphates as substrates. The protein is DNA-directed RNA polymerase subunit beta of Neisseria meningitidis serogroup A / serotype 4A (strain DSM 15465 / Z2491).